Here is a 211-residue protein sequence, read N- to C-terminus: tRNA (guanine-N(7)-)-methyltransferase (211 aa).

S-adenosyl-L-methionine-binding residues include glutamate 44, aspartate 69, aspartate 96, and aspartate 118. Residue aspartate 118 is part of the active site. Residue lysine 122 participates in substrate binding. The tract at residues 124 to 129 (RHEKRR) is interaction with RNA. Substrate-binding positions include aspartate 154 and 191–194 (TEYE).

This sequence belongs to the class I-like SAM-binding methyltransferase superfamily. TrmB family.

It catalyses the reaction guanosine(46) in tRNA + S-adenosyl-L-methionine = N(7)-methylguanosine(46) in tRNA + S-adenosyl-L-homocysteine. It functions in the pathway tRNA modification; N(7)-methylguanine-tRNA biosynthesis. Catalyzes the formation of N(7)-methylguanine at position 46 (m7G46) in tRNA. This Streptococcus mutans serotype c (strain ATCC 700610 / UA159) protein is tRNA (guanine-N(7)-)-methyltransferase.